A 932-amino-acid polypeptide reads, in one-letter code: RNA-binding protein 12 (932 aa).

Positions Ile97–Arg116 are disordered. The segment covering Pro98 to Arg116 has biased composition (low complexity). Residues Leu304–Glu379 enclose the RRM 1 domain. 2 positions are modified to phosphoserine: Ser352 and Ser375. A disordered region spans residues Gln393 to Ser424. Polar residues predominate over residues Leu408 to Gln417. 3 positions are modified to phosphoserine: Ser420, Ser422, and Ser424. The RRM 2 domain maps to Phe430–Lys507. Phosphoserine is present on Ser525. Low complexity predominate over residues Asn717 to Gly734. The interval Asn717 to Pro853 is disordered. Positions Ser783–Gly811 are enriched in gly residues. Residues Ala824 to Gly836 show a composition bias toward pro residues. Positions Thr856–Gly932 constitute an RRM 3 domain.

Its subcellular location is the nucleus. In Macaca mulatta (Rhesus macaque), this protein is RNA-binding protein 12 (RBM12).